Here is a 45-residue protein sequence, read N- to C-terminus: Photosystem II reaction center protein K (45 aa).

A propeptide spanning residues 1–8 (MDFALLLA) is cleaved from the precursor. Residues 24 to 44 (LPLIPLFFLLLAFVWQAAVGF) form a helical membrane-spanning segment.

Belongs to the PsbK family. In terms of assembly, PSII is composed of 1 copy each of membrane proteins PsbA, PsbB, PsbC, PsbD, PsbE, PsbF, PsbH, PsbI, PsbJ, PsbK, PsbL, PsbM, PsbT, PsbX, PsbY, PsbZ, Psb30/Ycf12, peripheral proteins PsbO, CyanoQ (PsbQ), PsbU, PsbV and a large number of cofactors. It forms dimeric complexes.

Its subcellular location is the cellular thylakoid membrane. In terms of biological role, one of the components of the core complex of photosystem II (PSII). PSII is a light-driven water:plastoquinone oxidoreductase that uses light energy to abstract electrons from H(2)O, generating O(2) and a proton gradient subsequently used for ATP formation. It consists of a core antenna complex that captures photons, and an electron transfer chain that converts photonic excitation into a charge separation. The sequence is that of Photosystem II reaction center protein K from Gloeothece citriformis (strain PCC 7424) (Cyanothece sp. (strain PCC 7424)).